The sequence spans 393 residues: uncharacterized protein (393 aa).

ATP is bound at residue 67 to 74; the sequence is GPDGMGKS.

This is an uncharacterized protein from Mycobacterium tuberculosis (strain CDC 1551 / Oshkosh).